The chain runs to 467 residues: Argininosuccinate lyase (467 aa).

It belongs to the lyase 1 family. Argininosuccinate lyase subfamily.

It localises to the cytoplasm. The catalysed reaction is 2-(N(omega)-L-arginino)succinate = fumarate + L-arginine. Its pathway is amino-acid biosynthesis; L-arginine biosynthesis; L-arginine from L-ornithine and carbamoyl phosphate: step 3/3. The sequence is that of Argininosuccinate lyase from Campylobacter curvus (strain 525.92).